Reading from the N-terminus, the 604-residue chain is Terpenoid synthase 30 (604 aa).

5 residues coordinate Mg(2+): N356, D360, N500, T504, and E508. The DDXXD motif; degenerate motif lies at 356–360 (NDVCD).

The protein belongs to the terpene synthase family. Tpsa subfamily. The cofactor is Mg(2+). Requires Mn(2+) as cofactor.

The protein resides in the cytoplasm. Its pathway is secondary metabolite biosynthesis; terpenoid biosynthesis. In terms of biological role, involved in terpene biosynthesis in roots. Possesses sesquiterpene (C15) synthase activity and diterpene (C20) synthase activity in vitro. This Arabidopsis thaliana (Mouse-ear cress) protein is Terpenoid synthase 30.